The primary structure comprises 381 residues: ELMO domain-containing protein 3 (381 aa).

Residues 1-17 show a composition bias toward basic and acidic residues; the sequence is MNENFHSFHEKELRDGQ. Residues 1–31 form a disordered region; that stretch reads MNENFHSFHEKELRDGQVESVSAGSSPPCDK. The ELMO domain maps to 170 to 324; sequence MHGRVLQTIY…DLEMSAKKSP (155 aa).

Its subcellular location is the cell projection. The protein localises to the stereocilium. It is found in the kinocilium. It localises to the cytoplasm. The protein resides in the cytoskeleton. Acts as a GTPase-activating protein (GAP) for ARL2 with low specific activity. In Bos taurus (Bovine), this protein is ELMO domain-containing protein 3 (ELMOD3).